Reading from the N-terminus, the 363-residue chain is S-adenosylmethionine:tRNA ribosyltransferase-isomerase (363 aa).

The protein belongs to the QueA family. As to quaternary structure, monomer.

Its subcellular location is the cytoplasm. It catalyses the reaction 7-aminomethyl-7-carbaguanosine(34) in tRNA + S-adenosyl-L-methionine = epoxyqueuosine(34) in tRNA + adenine + L-methionine + 2 H(+). It functions in the pathway tRNA modification; tRNA-queuosine biosynthesis. Functionally, transfers and isomerizes the ribose moiety from AdoMet to the 7-aminomethyl group of 7-deazaguanine (preQ1-tRNA) to give epoxyqueuosine (oQ-tRNA). The sequence is that of S-adenosylmethionine:tRNA ribosyltransferase-isomerase from Brucella anthropi (strain ATCC 49188 / DSM 6882 / CCUG 24695 / JCM 21032 / LMG 3331 / NBRC 15819 / NCTC 12168 / Alc 37) (Ochrobactrum anthropi).